The primary structure comprises 217 residues: Orotate phosphoribosyltransferase (217 aa).

5-phospho-alpha-D-ribose 1-diphosphate is bound at residue Lys-26. Position 34–35 (34–35 (FF)) interacts with orotate. Residues 72 to 73 (YK), Arg-99, Lys-100, Lys-103, His-105, and 124 to 132 (DDVITAGTA) contribute to the 5-phospho-alpha-D-ribose 1-diphosphate site. The orotate site is built by Thr-128 and Arg-156.

This sequence belongs to the purine/pyrimidine phosphoribosyltransferase family. PyrE subfamily. Homodimer. The cofactor is Mg(2+).

It carries out the reaction orotidine 5'-phosphate + diphosphate = orotate + 5-phospho-alpha-D-ribose 1-diphosphate. It functions in the pathway pyrimidine metabolism; UMP biosynthesis via de novo pathway; UMP from orotate: step 1/2. Catalyzes the transfer of a ribosyl phosphate group from 5-phosphoribose 1-diphosphate to orotate, leading to the formation of orotidine monophosphate (OMP). The sequence is that of Orotate phosphoribosyltransferase from Aeromonas salmonicida (strain A449).